A 295-amino-acid polypeptide reads, in one-letter code: Small ribosomal subunit biogenesis GTPase RsgA (295 aa).

The CP-type G domain maps to 68 to 228; that stretch reads KNLLVKPHVA…VVDTPGFANL (161 aa). Residues 117–120 and 170–178 each bind GTP; these read NKMD and GLSGVGKSS. Residues cysteine 250, cysteine 255, histidine 257, and cysteine 263 each contribute to the Zn(2+) site.

This sequence belongs to the TRAFAC class YlqF/YawG GTPase family. RsgA subfamily. As to quaternary structure, monomer. Associates with 30S ribosomal subunit, binds 16S rRNA. Zn(2+) is required as a cofactor.

The protein localises to the cytoplasm. Functionally, one of several proteins that assist in the late maturation steps of the functional core of the 30S ribosomal subunit. Helps release RbfA from mature subunits. May play a role in the assembly of ribosomal proteins into the subunit. Circularly permuted GTPase that catalyzes slow GTP hydrolysis, GTPase activity is stimulated by the 30S ribosomal subunit. The chain is Small ribosomal subunit biogenesis GTPase RsgA from Thermotoga neapolitana (strain ATCC 49049 / DSM 4359 / NBRC 107923 / NS-E).